Consider the following 351-residue polypeptide: Ribosomal RNA large subunit methyltransferase M (351 aa).

Residues S186, 219-222 (APGG), D238, D258, and D274 each bind S-adenosyl-L-methionine. The Proton acceptor role is filled by K303.

Belongs to the class I-like SAM-binding methyltransferase superfamily. RNA methyltransferase RlmE family. RlmM subfamily. As to quaternary structure, monomer.

It localises to the cytoplasm. It carries out the reaction cytidine(2498) in 23S rRNA + S-adenosyl-L-methionine = 2'-O-methylcytidine(2498) in 23S rRNA + S-adenosyl-L-homocysteine + H(+). Catalyzes the 2'-O-methylation at nucleotide C2498 in 23S rRNA. The polypeptide is Ribosomal RNA large subunit methyltransferase M (Xylella fastidiosa (strain M23)).